We begin with the raw amino-acid sequence, 283 residues long: Non-selective voltage-gated ion channel VDAC3 (283 aa).

Cys-2 carries the post-translational modification N-acetylcysteine. At Thr-4 the chain carries Phosphothreonine. Residues Lys-12, Lys-15, and Lys-20 each carry the N6-acetyllysine modification. 2 beta stranded membrane-spanning segments follow: residues Met-26 to Ser-35 and Val-39 to Ala-47. Lys-53 participates in a covalent cross-link: Glycyl lysine isopeptide (Lys-Gly) (interchain with G-Cter in ubiquitin). The next 3 beta stranded transmembrane spans lie at Ala-54–Ile-64, Leu-69–Asn-76, and Thr-80–Asn-89. N6-acetyllysine is present on Lys-90. The chain crosses the membrane as a beta stranded span at residues Leu-95–Val-104. Residues Lys-109 and Lys-110 each participate in a glycyl lysine isopeptide (Lys-Gly) (interchain with G-Cter in ubiquitin) cross-link. The next 10 beta stranded transmembrane spans lie at Ser-111–Arg-120, Phe-123–Asp-130, Thr-137–Ala-145, Leu-150–Asp-158, Lys-163–Ala-175, Phe-178–Asn-185, Glu-189–Val-198, Ile-202–Thr-211, Arg-218–Leu-227, and Thr-231–Asn-238. Ser-241 carries the phosphoserine modification. NAD(+)-binding positions include Leu-242 to Gly-244 and Ser-260 to Asp-264. The next 2 membrane-spanning stretches (beta stranded) occupy residues Leu-242 to Leu-251 and Gly-254 to Ile-263. Lys-266 carries the post-translational modification N6-acetyllysine; alternate. Residue Lys-266 forms a Glycyl lysine isopeptide (Lys-Gly) (interchain with G-Cter in ubiquitin); alternate linkage. Residues His-273–Glu-282 form a beta stranded membrane-spanning segment.

Belongs to the eukaryotic mitochondrial porin family. As to quaternary structure, interacts with ARMC12 in a TBC1D21-dependent manner. Interacts with MISFA. In terms of processing, ubiquitinated by PRKN during mitophagy, leading to its degradation and enhancement of mitophagy. Deubiquitinated by USP30.

It localises to the mitochondrion outer membrane. The protein localises to the membrane. It catalyses the reaction chloride(in) = chloride(out). It carries out the reaction K(+)(in) = K(+)(out). Its function is as follows. Non-selective voltage-gated ion channel that mediates the transport of anions and cations through the mitochondrion outer membrane and plasma membrane. Forms a high-conducting channel with a stable open state and a voltage-induced closure with a mild preference for anions over cations. Involved in male fertility and sperm mitochondrial sheath formation. The polypeptide is Non-selective voltage-gated ion channel VDAC3 (Bos taurus (Bovine)).